The chain runs to 387 residues: Phosphoglycerate kinase (387 aa).

Substrate-binding positions include Asp-21–Asn-23, Arg-36, His-59–Arg-62, Arg-113, and Arg-146. Residues Lys-197, Glu-314, and Gly-340 to Thr-343 each bind ATP.

The protein belongs to the phosphoglycerate kinase family. In terms of assembly, monomer.

It localises to the cytoplasm. It catalyses the reaction (2R)-3-phosphoglycerate + ATP = (2R)-3-phospho-glyceroyl phosphate + ADP. Its pathway is carbohydrate degradation; glycolysis; pyruvate from D-glyceraldehyde 3-phosphate: step 2/5. The polypeptide is Phosphoglycerate kinase (Pseudomonas aeruginosa (strain ATCC 15692 / DSM 22644 / CIP 104116 / JCM 14847 / LMG 12228 / 1C / PRS 101 / PAO1)).